The chain runs to 182 residues: uncharacterized protein (182 aa).

This is an uncharacterized protein from Haemophilus influenzae (strain ATCC 51907 / DSM 11121 / KW20 / Rd).